The sequence spans 473 residues: Ribulose bisphosphate carboxylase large chain (473 aa).

Residues 1–136 (MAVKKYSAGV…RLEDVRFPLA (136 aa)) are necessary and sufficient to target proteins to carboxysomes, interacts with shell proteins. Residues Asn-116 and Thr-166 each coordinate substrate. Lys-168 functions as the Proton acceptor in the catalytic mechanism. Substrate is bound at residue Lys-170. The Mg(2+) site is built by Lys-194, Asp-196, and Glu-197. Residue Lys-194 is modified to N6-carboxylysine. The active-site Proton acceptor is His-287. Substrate is bound by residues Arg-288, His-320, and Ser-372.

The protein belongs to the RuBisCO large chain family. Type I subfamily. In terms of assembly, heterohexadecamer of 8 large chains and 8 small chains. Forms a CsoS2-CsoS1-RuBisCO complex. The N-terminus (residues 1-136) interacts with shell proteins CsoS1A, CsoS1B and CsoS1C. Holo-RuBisCO interacts with the N-terminal repeats of CsoS2; binding is sensitive to ionic strength. A fusion of a single N-terminal repeat to the C-terminus of the large subunit of RuBisCO (cbbL) shows the repeat can lie between a CbbL dimer, making minor contacts to CbbS; thus each RuBisCO holoenzyme could bind 8 repeats. Mg(2+) is required as a cofactor.

The protein localises to the carboxysome. The enzyme catalyses 2 (2R)-3-phosphoglycerate + 2 H(+) = D-ribulose 1,5-bisphosphate + CO2 + H2O. The catalysed reaction is D-ribulose 1,5-bisphosphate + O2 = 2-phosphoglycolate + (2R)-3-phosphoglycerate + 2 H(+). Functionally, ruBisCO catalyzes two reactions: the carboxylation of D-ribulose 1,5-bisphosphate, the primary event in carbon dioxide fixation, as well as the oxidative fragmentation of the pentose substrate. Both reactions occur simultaneously and in competition at the same active site. There are estimated to be 270 RuBisCO heterohexadecamers per carboxysome. Its function is as follows. Alpha-carboxysomes are able to assemble in the absence of RuBisCO, unlike beta-carboxysomes. The RuBisCO large subunit is required for enzyme integration into carboxysomes; replacing it with the carboxysomally targeted gene (Tcr_0838, AC Q31HD9) of H.crungenus places RuBisCO in the carboxysome, while the non-carboxysomal large subunit of H.crungenus (Tcr_0427, AC Q31IK0) is not incorporated in the carboxysome. In Halothiobacillus neapolitanus (strain ATCC 23641 / c2) (Thiobacillus neapolitanus), this protein is Ribulose bisphosphate carboxylase large chain.